The sequence spans 99 residues: Acylphosphatase (99 aa).

Positions Ile-5–Pro-97 constitute an Acylphosphatase-like domain. Residues Arg-20 and Asn-38 contribute to the active site.

It belongs to the acylphosphatase family.

It catalyses the reaction an acyl phosphate + H2O = a carboxylate + phosphate + H(+). The sequence is that of Acylphosphatase (acyP) from Bradyrhizobium diazoefficiens (strain JCM 10833 / BCRC 13528 / IAM 13628 / NBRC 14792 / USDA 110).